We begin with the raw amino-acid sequence, 446 residues long: MKFIPHTDEERRQMLKHLAVENTDQLFKDIPSELRLNRDLAVEGGLSEMELQSHMNSLAGLNTGVDQTICFLGAGAYDHYIPSAVKHILSRSEFYTAYTPYQPEISQGVLQSIFEYQSMICLLTGMDAANASMYDGASALAEAALMACAVTRRDKVLVASTLHPEYREVVKTYLHGPGIEISEIAYQEGLSQLADIDQKLDKKTAAVLVQYPNFFGCIEDLGKIAEQAHAKGALLVVCVDPIALGILKSPGQCGADIVVGEGQSLGIPLSYGGPYLGFMACKDKYLRKMPGRIVGQTVDVEGRRGYVLTLQAREQHIRRDKATSNICSNQALCALAATVYLSLVGRQGFKQVAELCLQKTAYAKELLAALPGYQLPWQTPVFKEFVLKTKEAPEVINRELLKENILGGLDLGGYYPELAGHMLFCVTEKRSRREIELLAARLGAIS.

This sequence belongs to the GcvP family. N-terminal subunit subfamily. As to quaternary structure, the glycine cleavage system is composed of four proteins: P, T, L and H. In this organism, the P 'protein' is a heterodimer of two subunits.

The catalysed reaction is N(6)-[(R)-lipoyl]-L-lysyl-[glycine-cleavage complex H protein] + glycine + H(+) = N(6)-[(R)-S(8)-aminomethyldihydrolipoyl]-L-lysyl-[glycine-cleavage complex H protein] + CO2. Its function is as follows. The glycine cleavage system catalyzes the degradation of glycine. The P protein binds the alpha-amino group of glycine through its pyridoxal phosphate cofactor; CO(2) is released and the remaining methylamine moiety is then transferred to the lipoamide cofactor of the H protein. The chain is Probable glycine dehydrogenase (decarboxylating) subunit 1 from Desulforamulus reducens (strain ATCC BAA-1160 / DSM 100696 / MI-1) (Desulfotomaculum reducens).